Here is a 129-residue protein sequence, read N- to C-terminus: Lysozyme C-1/C-2 (129 aa).

Residues 1–129 (KVFERCELAR…VSSYVEGCTL (129 aa)) enclose the C-type lysozyme domain. Intrachain disulfides connect Cys-6–Cys-127, Cys-30–Cys-115, Cys-65–Cys-81, and Cys-77–Cys-95. Active-site residues include Glu-35 and Asp-53.

It belongs to the glycosyl hydrolase 22 family. Monomer.

The catalysed reaction is Hydrolysis of (1-&gt;4)-beta-linkages between N-acetylmuramic acid and N-acetyl-D-glucosamine residues in a peptidoglycan and between N-acetyl-D-glucosamine residues in chitodextrins.. Functionally, lysozymes have primarily a bacteriolytic function; those in tissues and body fluids are associated with the monocyte-macrophage system and enhance the activity of immunoagents. The chain is Lysozyme C-1/C-2 from Axis axis (Axis deer).